A 138-amino-acid chain; its full sequence is Sec-independent protein translocase protein TatB (138 aa).

A helical membrane pass occupies residues 1–21 (MFDIGATELLVIAIVAILVIG). Residues 74 to 138 (MAKHPADQMQ…EPRLPLEGRD (65 aa)) form a disordered region. Residues 83–97 (QPLDAPDPALSAAEA) are compositionally biased toward low complexity. Residues 98 to 138 (RAAHTEAAKPARAAEETQADRASADEHPAASEPRLPLEGRD) are compositionally biased toward basic and acidic residues.

This sequence belongs to the TatB family. As to quaternary structure, the Tat system comprises two distinct complexes: a TatABC complex, containing multiple copies of TatA, TatB and TatC subunits, and a separate TatA complex, containing only TatA subunits. Substrates initially bind to the TatABC complex, which probably triggers association of the separate TatA complex to form the active translocon.

It localises to the cell inner membrane. Its function is as follows. Part of the twin-arginine translocation (Tat) system that transports large folded proteins containing a characteristic twin-arginine motif in their signal peptide across membranes. Together with TatC, TatB is part of a receptor directly interacting with Tat signal peptides. TatB may form an oligomeric binding site that transiently accommodates folded Tat precursor proteins before their translocation. The chain is Sec-independent protein translocase protein TatB from Erythrobacter litoralis (strain HTCC2594).